A 355-amino-acid polypeptide reads, in one-letter code: Phosphoribosylformylglycinamidine cyclo-ligase (355 aa).

The protein belongs to the AIR synthase family.

The protein localises to the cytoplasm. It catalyses the reaction 2-formamido-N(1)-(5-O-phospho-beta-D-ribosyl)acetamidine + ATP = 5-amino-1-(5-phospho-beta-D-ribosyl)imidazole + ADP + phosphate + H(+). Its pathway is purine metabolism; IMP biosynthesis via de novo pathway; 5-amino-1-(5-phospho-D-ribosyl)imidazole from N(2)-formyl-N(1)-(5-phospho-D-ribosyl)glycinamide: step 2/2. The sequence is that of Phosphoribosylformylglycinamidine cyclo-ligase from Methylobacterium nodulans (strain LMG 21967 / CNCM I-2342 / ORS 2060).